A 352-amino-acid chain; its full sequence is MEDSRETSPSSNNSSEELSSTLQLSKGMSIFLDILRRADKNDDGKLSFEEFKAYFADGVLSGEELHELFHTIDTHNTNNLDTEELCEYFSQHLGEYENVLAALEDLNLSILKAMGKTKKDYQEASNLEQFVTRFLLKETLNQLQSLQNSLECAMETTEEQTRQERQGPSKPEVLSIQWPGKRSSRRVQRHNSFSPNSPQFNVSSPALLEEDNQWMTQINRLQKLIDRLEKKDLKLEPLEEEIIEENTKPHIMLVQRQMSVTEEDLEEFQLALKHYVESASAQSGCLRISIQKLSNESRYMIYEFWENSSVWNRHLQTNYSKTFQRSNVDFLETPELTSTMLVPASWWILNNN.

Phosphoserine is present on Ser-4. EF-hand domains are found at residues 26–61 (KGMS…GVLS) and 60–95 (LSGE…HLGE). Ca(2+)-binding residues include Asp-39, Asn-41, Asp-43, Lys-45, and Glu-50. Residues 135–163 (LLKETLNQLQSLQNSLECAMETTEEQTRQ) are a coiled coil. The interval 155-202 (ETTEEQTRQERQGPSKPEVLSIQWPGKRSSRRVQRHNSFSPNSPQFNV) is disordered. Residues 190–202 (HNSFSPNSPQFNV) show a composition bias toward polar residues. Phosphoserine is present on residues Ser-192 and Ser-197. The stretch at 209–275 (EEDNQWMTQI…EEFQLALKHY (67 aa)) forms a coiled coil. Residues 252-340 (MLVQRQMSVT…LETPELTSTM (89 aa)) form the ABM domain.

In terms of assembly, interacts with STX1. May interact with CPNE6. As to expression, expressed in brain (at protein level). Expressed in the cerebral cortex only in layer 4, thalamic nuclei (the mediodorsal nucleus), hippocampus (a small band of pyramidal neurons at the boundary between CA1 and CA3), interneurons interspersed throughout the hippocampus proper, interneurons in the hilus, bodies of the neurons but also their dendritic projections (at protein level).

It localises to the cytoplasm. This is N-terminal EF-hand calcium-binding protein 1 (Necab1) from Mus musculus (Mouse).